A 395-amino-acid polypeptide reads, in one-letter code: Elongation factor Ts, mitochondrial (395 aa).

Residues 1–63 (MAFARAVRRP…RGFGNFIRSF (63 aa)) constitute a mitochondrion transit peptide.

The protein belongs to the EF-Ts family.

The protein localises to the mitochondrion. Functionally, associates with the EF-Tu.GDP complex and induces the exchange of GDP to GTP. It remains bound to the aminoacyl-tRNA.EF-Tu.GTP complex up to the GTP hydrolysis stage on the ribosome. This Arabidopsis thaliana (Mouse-ear cress) protein is Elongation factor Ts, mitochondrial.